The sequence spans 643 residues: 1-deoxy-D-xylulose-5-phosphate synthase (643 aa).

Thiamine diphosphate is bound by residues histidine 89 and 130–132; that span reads GHS. Aspartate 161 is a Mg(2+) binding site. Thiamine diphosphate is bound by residues 162–163, asparagine 190, phenylalanine 297, and glutamate 380; that span reads GA. Residue asparagine 190 coordinates Mg(2+).

The protein belongs to the transketolase family. DXPS subfamily. In terms of assembly, homodimer. It depends on Mg(2+) as a cofactor. The cofactor is thiamine diphosphate.

The catalysed reaction is D-glyceraldehyde 3-phosphate + pyruvate + H(+) = 1-deoxy-D-xylulose 5-phosphate + CO2. Its pathway is metabolic intermediate biosynthesis; 1-deoxy-D-xylulose 5-phosphate biosynthesis; 1-deoxy-D-xylulose 5-phosphate from D-glyceraldehyde 3-phosphate and pyruvate: step 1/1. Its function is as follows. Catalyzes the acyloin condensation reaction between C atoms 2 and 3 of pyruvate and glyceraldehyde 3-phosphate to yield 1-deoxy-D-xylulose-5-phosphate (DXP). The sequence is that of 1-deoxy-D-xylulose-5-phosphate synthase from Hahella chejuensis (strain KCTC 2396).